A 218-amino-acid polypeptide reads, in one-letter code: Ribonuclease S-7 (218 aa).

The first 22 residues, 1–22, serve as a signal peptide directing secretion; it reads MLNSPLTSVLFVLLFVLSPIYG. Glutamine 32 provides a ligand contact to RNA. The cysteines at positions 38 and 43 are disulfide-linked. N-linked (GlcNAc...) asparagine glycosylation is present at asparagine 49. Residue histidine 53 participates in RNA binding. The active-site Proton donor is histidine 53. Residue asparagine 59 is glycosylated (N-linked (GlcNAc...) asparagine). A disulfide bridge connects residues cysteine 67 and cysteine 116. RNA contacts are provided by residues 91-92, phenylalanine 105, 108-109, and 112-113; these read DL, HE, and KH. The active site involves glutamate 109. Histidine 113 (proton acceptor) is an active-site residue. Residue asparagine 162 is glycosylated (N-linked (GlcNAc...) asparagine). 2 disulfide bridges follow: cysteine 177-cysteine 207 and cysteine 190-cysteine 201.

It belongs to the RNase T2 family.

The protein localises to the secreted. Its subcellular location is the extracellular space. It catalyses the reaction a ribonucleotidyl-ribonucleotide-RNA + H2O = a 3'-end 3'-phospho-ribonucleotide-RNA + a 5'-end dephospho-ribonucleoside-RNA + H(+). Functionally, self-incompatibility (SI) is the inherited ability of a flowering plant to prevent self-fertilization by discriminating between self and non-self pollen during pollination. In many species of the Solanaceae, self-incompatibility is controlled by the single, multiallelic locus S. This stylar glycoprotein is associated with expression of self-incompatibility in potato. This chain is Ribonuclease S-7, found in Nicotiana alata (Winged tobacco).